Here is an 899-residue protein sequence, read N- to C-terminus: Bifunctional uridylyltransferase/uridylyl-removing enzyme (899 aa).

The tract at residues 1-347 (MFISDPTDSL…PESERPEKSV (347 aa)) is uridylyltransferase. The uridylyl-removing stretch occupies residues 348–718 (LNARFNRVGD…EHRELALDAV (371 aa)). One can recognise an HD domain in the interval 465 to 581 (VDAHILLLIR…TKFANLVGNV (117 aa)). 2 consecutive ACT domains span residues 719–804 (QIFI…RLPR) and 827–899 (VMSL…TPSC).

Belongs to the GlnD family. Mg(2+) is required as a cofactor.

The enzyme catalyses [protein-PII]-L-tyrosine + UTP = [protein-PII]-uridylyl-L-tyrosine + diphosphate. It catalyses the reaction [protein-PII]-uridylyl-L-tyrosine + H2O = [protein-PII]-L-tyrosine + UMP + H(+). With respect to regulation, uridylyltransferase (UTase) activity is inhibited by glutamine, while glutamine activates uridylyl-removing (UR) activity. Modifies, by uridylylation and deuridylylation, the PII regulatory proteins (GlnB and homologs), in response to the nitrogen status of the cell that GlnD senses through the glutamine level. Under low glutamine levels, catalyzes the conversion of the PII proteins and UTP to PII-UMP and PPi, while under higher glutamine levels, GlnD hydrolyzes PII-UMP to PII and UMP (deuridylylation). Thus, controls uridylylation state and activity of the PII proteins, and plays an important role in the regulation of nitrogen assimilation and metabolism. The sequence is that of Bifunctional uridylyltransferase/uridylyl-removing enzyme from Psychrobacter sp. (strain PRwf-1).